A 56-amino-acid polypeptide reads, in one-letter code: Alpha-conotoxin TxIA (56 aa).

Positions 1 to 16 (MFTVFLLVVLATAVVS) are cleaved as a signal peptide. The propeptide occupies 17–39 (FTSDRASDDGKAAASDLITLTIK). 2 disulfides stabilise this stretch: C41-C47 and C42-C55. The tract at residues 43–45 (SRP) is ser-Xaa-Pro motif, crucial for potent interaction with nAChR. P45 and P46 each carry 4-hydroxyproline; partial. Position 55 is a cysteine amide (C55).

This sequence belongs to the conotoxin A superfamily. Exists in 4 different forms, depending on hydroxylations. Tx1a-PP does not contain hydroxyproline, tx1a-OP has one hydroxyproline at position 45, tx1a-PO has one hydroxyproline at position 46, and tx1a-PP has two hydroxyprolines at positions 45 and 46. Expressed by the venom duct. Tx1a that containing 1 or 2 non-hydroxylated prolines are mostly present in part 5 of the venom duct (distal part near the pharynx), whereas tx1a-OO (with 2 hydroxyprolines) is mostly present in part 4 of the venom duct (follewed by part 3).

It localises to the secreted. In terms of biological role, alpha-conotoxins act on postsynaptic membranes, they bind to the nicotinic acetylcholine receptors (nAChR) and thus inhibit them. This toxin inhibits rat alpha-3-beta-2/CHRNA3-CHRNB2 (IC(50)=3.5 nM), rat alpha-7/CHRNA7 (IC(50)=392 nM) nAChR, and the L.stagnalis soluble acetylcholine receptor (all tested without hydroxyproline). The polypeptide is Alpha-conotoxin TxIA (Conus textile (Cloth-of-gold cone)).